The following is a 426-amino-acid chain: UDP-N-acetylglucosamine 1-carboxyvinyltransferase (426 aa).

22–23 contributes to the phosphoenolpyruvate binding site; the sequence is KN. Arginine 99 contributes to the UDP-N-acetyl-alpha-D-glucosamine binding site. Cysteine 123 (proton donor) is an active-site residue. A 2-(S-cysteinyl)pyruvic acid O-phosphothioketal modification is found at cysteine 123. UDP-N-acetyl-alpha-D-glucosamine contacts are provided by residues 128 to 132, aspartate 313, and isoleucine 335; that span reads RPIDL.

Belongs to the EPSP synthase family. MurA subfamily.

The protein localises to the cytoplasm. It catalyses the reaction phosphoenolpyruvate + UDP-N-acetyl-alpha-D-glucosamine = UDP-N-acetyl-3-O-(1-carboxyvinyl)-alpha-D-glucosamine + phosphate. It functions in the pathway cell wall biogenesis; peptidoglycan biosynthesis. Functionally, cell wall formation. Adds enolpyruvyl to UDP-N-acetylglucosamine. The sequence is that of UDP-N-acetylglucosamine 1-carboxyvinyltransferase from Zymomonas mobilis subsp. mobilis (strain ATCC 31821 / ZM4 / CP4).